Consider the following 149-residue polypeptide: Nucleoside diphosphate kinase (149 aa).

Positions 9, 57, 85, 91, 102, and 112 each coordinate ATP. The Pros-phosphohistidine intermediate role is filled by histidine 115.

This sequence belongs to the NDK family. Homotetramer. Mg(2+) is required as a cofactor.

It localises to the cytoplasm. The enzyme catalyses a 2'-deoxyribonucleoside 5'-diphosphate + ATP = a 2'-deoxyribonucleoside 5'-triphosphate + ADP. The catalysed reaction is a ribonucleoside 5'-diphosphate + ATP = a ribonucleoside 5'-triphosphate + ADP. Functionally, major role in the synthesis of nucleoside triphosphates other than ATP. The ATP gamma phosphate is transferred to the NDP beta phosphate via a ping-pong mechanism, using a phosphorylated active-site intermediate. This chain is Nucleoside diphosphate kinase, found in Roseiflexus sp. (strain RS-1).